Reading from the N-terminus, the 301-residue chain is Ornithine carbamoyltransferase (301 aa).

Residues 53 to 56 (STRT), Gln80, Arg104, and 131 to 134 (HPCQ) contribute to the carbamoyl phosphate site. L-ornithine is bound by residues Asn162, Asp221, and 225–226 (SI). Carbamoyl phosphate contacts are provided by residues 260 to 261 (CL) and Arg288.

This sequence belongs to the aspartate/ornithine carbamoyltransferase superfamily. OTCase family.

It is found in the cytoplasm. The catalysed reaction is carbamoyl phosphate + L-ornithine = L-citrulline + phosphate + H(+). It functions in the pathway amino-acid biosynthesis; L-arginine biosynthesis; L-arginine from L-ornithine and carbamoyl phosphate: step 1/3. In terms of biological role, reversibly catalyzes the transfer of the carbamoyl group from carbamoyl phosphate (CP) to the N(epsilon) atom of ornithine (ORN) to produce L-citrulline. This is Ornithine carbamoyltransferase from Cenarchaeum symbiosum (strain A).